Consider the following 206-residue polypeptide: Phosphoserine phosphatase (206 aa).

The active-site Nucleophile is the Asp-7. 2 residues coordinate Mg(2+): Asp-7 and Asp-9. Catalysis depends on Asp-9, which acts as the Proton donor. Residues Glu-16, Arg-52, 95–96, and Lys-140 contribute to the substrate site; that span reads SG. Asp-163 contributes to the Mg(2+) binding site. Asn-166 provides a ligand contact to substrate.

The protein belongs to the HAD-like hydrolase superfamily. SerB family. The cofactor is Mg(2+).

It catalyses the reaction O-phospho-L-serine + H2O = L-serine + phosphate. The enzyme catalyses O-phospho-D-serine + H2O = D-serine + phosphate. It functions in the pathway amino-acid biosynthesis; L-serine biosynthesis; L-serine from 3-phospho-D-glycerate: step 3/3. This chain is Phosphoserine phosphatase, found in Wolinella succinogenes (strain ATCC 29543 / DSM 1740 / CCUG 13145 / JCM 31913 / LMG 7466 / NCTC 11488 / FDC 602W) (Vibrio succinogenes).